The primary structure comprises 236 residues: Sugar fermentation stimulation protein homolog (236 aa).

It belongs to the SfsA family.

The polypeptide is Sugar fermentation stimulation protein homolog (Desulfotalea psychrophila (strain LSv54 / DSM 12343)).